The chain runs to 131 residues: Small ribosomal subunit protein eS6 (131 aa).

Belongs to the eukaryotic ribosomal protein eS6 family.

The chain is Small ribosomal subunit protein eS6 from Halobacterium salinarum (strain ATCC 29341 / DSM 671 / R1).